Consider the following 246-residue polypeptide: UL16-binding protein 2 (246 aa).

The signal sequence occupies residues 1-25 (MAAAAATKILLCLPLLLLLSGWSRA). An MHC class I alpha-1 like region spans residues 29–117 (DPHSLCYDIT…IQLENYTPKE (89 aa)). Cys50 and Cys66 form a disulfide bridge. Residues Asn68 and Asn82 are each glycosylated (N-linked (GlcNAc...) asparagine). The MHC class I alpha-2 like stretch occupies residues 118-210 (PLTLQARMSC…MDSTLEPSAG (93 aa)). Cysteines 127 and 190 form a disulfide. Ser216 contributes to the a protein binding site. A lipid anchor (GPI-anchor amidated serine) is attached at Ser217. Positions 218 to 246 (GTTQLRATATTLILCCLLIILPCFILPGI) are cleaved as a propeptide — removed in mature form.

This sequence belongs to the MHC class I family. As to quaternary structure, interacts with KLRK1/NKG2D. Does not bind to beta2-microglobulin. (Microbial infection) In CMV-infected cells, interacts with the viral glycoprotein UL16; this interaction causes ULBP2 retention in the endoplasmic reticulum and cis-Golgi and prevents binding to and activation of KLRK1/NKG2D, providing CMV with an immune evasion mechanism. In terms of tissue distribution, expressed in various types of cancer cell lines and in the fetus, but not in normal tissues.

It localises to the cell membrane. It is found in the endoplasmic reticulum. The protein localises to the secreted. Functionally, binds and activates the KLRK1/NKG2D receptor, mediating natural killer cell cytotoxicity. This is UL16-binding protein 2 from Homo sapiens (Human).